The primary structure comprises 200 residues: dITP/XTP pyrophosphatase (200 aa).

Residue 8–13 participates in substrate binding; that stretch reads TRNAGK. D72 functions as the Proton acceptor in the catalytic mechanism. D72 is a binding site for Mg(2+). Residues S73, 155–158, K178, and 183–184 each bind substrate; these read FGYD and HR.

This sequence belongs to the HAM1 NTPase family. As to quaternary structure, homodimer. Mg(2+) is required as a cofactor.

It carries out the reaction XTP + H2O = XMP + diphosphate + H(+). It catalyses the reaction dITP + H2O = dIMP + diphosphate + H(+). The enzyme catalyses ITP + H2O = IMP + diphosphate + H(+). Functionally, pyrophosphatase that catalyzes the hydrolysis of nucleoside triphosphates to their monophosphate derivatives, with a high preference for the non-canonical purine nucleotides XTP (xanthosine triphosphate), dITP (deoxyinosine triphosphate) and ITP. Seems to function as a house-cleaning enzyme that removes non-canonical purine nucleotides from the nucleotide pool, thus preventing their incorporation into DNA/RNA and avoiding chromosomal lesions. The polypeptide is dITP/XTP pyrophosphatase (Streptomyces avermitilis (strain ATCC 31267 / DSM 46492 / JCM 5070 / NBRC 14893 / NCIMB 12804 / NRRL 8165 / MA-4680)).